The chain runs to 293 residues: Kallikrein-5 (293 aa).

An N-terminal signal peptide occupies residues 1 to 22 (MATARPPWMWVLCALITALLLG). Residues 37–49 (HPSNTVPSGSNQD) show a composition bias toward polar residues. A disordered region spans residues 37 to 68 (HPSNTVPSGSNQDLGAGAGEDARSDDSSSRII). The 224-residue stretch at 67–290 (IINGSDCDMH…FTKWIQETIQ (224 aa)) folds into the Peptidase S1 domain. N-linked (GlcNAc...) asparagine glycosylation is present at N69. 6 disulfide bridges follow: C73-C206, C93-C109, C178-C279, C185-C251, C217-C231, and C241-C266. Residues H108 and D153 each act as charge relay system in the active site. N173 and N208 each carry an N-linked (GlcNAc...) asparagine glycan. S245 serves as the catalytic Charge relay system. N-linked (GlcNAc...) asparagine glycosylation occurs at N252.

It belongs to the peptidase S1 family. Kallikrein subfamily. As to quaternary structure, interacts with SPINK9. In terms of tissue distribution, expressed in skin, breast, brain and testis. Expressed at the stratum granulosum of palmar skin.

The protein resides in the secreted. Its activity is regulated as follows. Inhibited by Zn2+. Its function is as follows. May be involved in desquamation. The protein is Kallikrein-5 of Homo sapiens (Human).